We begin with the raw amino-acid sequence, 277 residues long: Putative phosphoenolpyruvate synthase regulatory protein (277 aa).

Residue 157-164 coordinates ADP; that stretch reads GVSRCGKT.

Belongs to the pyruvate, phosphate/water dikinase regulatory protein family. PSRP subfamily.

It catalyses the reaction [pyruvate, water dikinase] + ADP = [pyruvate, water dikinase]-phosphate + AMP + H(+). It carries out the reaction [pyruvate, water dikinase]-phosphate + phosphate + H(+) = [pyruvate, water dikinase] + diphosphate. Its function is as follows. Bifunctional serine/threonine kinase and phosphorylase involved in the regulation of the phosphoenolpyruvate synthase (PEPS) by catalyzing its phosphorylation/dephosphorylation. The sequence is that of Putative phosphoenolpyruvate synthase regulatory protein from Klebsiella pneumoniae (strain 342).